A 150-amino-acid polypeptide reads, in one-letter code: 3-hydroxyacyl-[acyl-carrier-protein] dehydratase FabZ (150 aa).

Residue H51 is part of the active site.

The protein belongs to the thioester dehydratase family. FabZ subfamily.

The protein localises to the cytoplasm. The enzyme catalyses a (3R)-hydroxyacyl-[ACP] = a (2E)-enoyl-[ACP] + H2O. Functionally, involved in unsaturated fatty acids biosynthesis. Catalyzes the dehydration of short chain beta-hydroxyacyl-ACPs and long chain saturated and unsaturated beta-hydroxyacyl-ACPs. The sequence is that of 3-hydroxyacyl-[acyl-carrier-protein] dehydratase FabZ from Geobacter sulfurreducens (strain ATCC 51573 / DSM 12127 / PCA).